We begin with the raw amino-acid sequence, 276 residues long: Ribosomal RNA small subunit methyltransferase A (276 aa).

Asparagine 19, leucine 21, glycine 46, glutamate 71, aspartate 94, and asparagine 117 together coordinate S-adenosyl-L-methionine.

Belongs to the class I-like SAM-binding methyltransferase superfamily. rRNA adenine N(6)-methyltransferase family. RsmA subfamily.

The protein localises to the cytoplasm. It catalyses the reaction adenosine(1518)/adenosine(1519) in 16S rRNA + 4 S-adenosyl-L-methionine = N(6)-dimethyladenosine(1518)/N(6)-dimethyladenosine(1519) in 16S rRNA + 4 S-adenosyl-L-homocysteine + 4 H(+). Specifically dimethylates two adjacent adenosines (A1518 and A1519) in the loop of a conserved hairpin near the 3'-end of 16S rRNA in the 30S particle. May play a critical role in biogenesis of 30S subunits. The protein is Ribosomal RNA small subunit methyltransferase A of Burkholderia ambifaria (strain ATCC BAA-244 / DSM 16087 / CCUG 44356 / LMG 19182 / AMMD) (Burkholderia cepacia (strain AMMD)).